A 941-amino-acid chain; its full sequence is Glycine dehydrogenase (decarboxylating) (941 aa).

An N6-(pyridoxal phosphate)lysine modification is found at Lys-692.

The protein belongs to the GcvP family. In terms of assembly, the glycine cleavage system is composed of four proteins: P, T, L and H. Pyridoxal 5'-phosphate is required as a cofactor.

The enzyme catalyses N(6)-[(R)-lipoyl]-L-lysyl-[glycine-cleavage complex H protein] + glycine + H(+) = N(6)-[(R)-S(8)-aminomethyldihydrolipoyl]-L-lysyl-[glycine-cleavage complex H protein] + CO2. The glycine cleavage system catalyzes the degradation of glycine. The P protein binds the alpha-amino group of glycine through its pyridoxal phosphate cofactor; CO(2) is released and the remaining methylamine moiety is then transferred to the lipoamide cofactor of the H protein. The polypeptide is Glycine dehydrogenase (decarboxylating) (Mycolicibacterium paratuberculosis (strain ATCC BAA-968 / K-10) (Mycobacterium paratuberculosis)).